Reading from the N-terminus, the 1352-residue chain is Alpha-protein kinase 1 (1352 aa).

One can recognise an Arf-GAP domain in the interval 7-127 (DPNYGLLRSL…RWTSSLSTSD (121 aa)). The segment at 25–48 (CAECNSANVPYVCIKLGVFICPTC) adopts a C4-type zinc-finger fold. Disordered regions lie at residues 123 to 164 (LSTS…NNNN), 219 to 380 (TQSQ…PQHH), 424 to 445 (QQQQ…NSEP), 457 to 484 (HNHH…GNNS), 503 to 560 (FVEE…GGVS), and 619 to 658 (IINN…TNQN). The segment covering 237–246 (GFSPFNSPRS) has biased composition (polar residues). 2 stretches are compositionally biased toward low complexity: residues 268-287 (NNSN…NNGN) and 298-318 (NNNN…NNNN). Composition is skewed to polar residues over residues 329–352 (KTFS…SGNS) and 359–379 (HPTQ…SPQH). A coiled-coil region spans residues 393 to 429 (TTQQQLQQQQLQLQQQLQQQLQQQQQQQQQQQQQQQS). 2 stretches are compositionally biased toward basic residues: residues 458 to 470 (NHHH…HHKQ) and 510 to 523 (HQHP…RHHS). Positions 619 to 636 (IINNQNNQNNNNNNNTNN) are enriched in low complexity. The stretch at 689 to 781 (YIQQQQQQQQ…QQQQQQHINL (93 aa)) forms a coiled coil. Disordered stretches follow at residues 786-863 (PLQS…TDED) and 901-979 (TSPI…PDAR). Over residues 799–812 (PQHSSSQYMNQQGY) the composition is skewed to polar residues. Residues 821-859 (QPQSPQQIQPQPLQQQIFQQVQQQQPQIPQQSPQPLQSS) show a composition bias toward low complexity. Residues 906-915 (QQPPQPPQPV) show a composition bias toward pro residues. Low complexity predominate over residues 931–965 (QQQNGPTVPQQQQQQQQQQQQQQQQQQQQQQQQQP). Residues 990–1194 (RFDAKLGKWV…ICHYLGLSSV (205 aa)) form the Alpha-type protein kinase domain. Residue 1164–1169 (GKGNLG) participates in ATP binding. Disordered regions lie at residues 1198–1234 (PAND…SFNF) and 1279–1352 (QQQQ…KLVS). The stretch at 1241-1320 (HVLEQLNQQQ…QQQQQQQQNG (80 aa)) forms a coiled coil. Low complexity predominate over residues 1279–1319 (QQQQQQQQQQQQQQQQNQQQNQQQNQQQQQQQQQQQQQQQN). Residues 1321-1332 (HPPPQTPLPPTP) show a composition bias toward pro residues. The segment covering 1334–1352 (QKDKPKIEVFGDILRKLVS) has biased composition (basic and acidic residues).

Belongs to the protein kinase superfamily. Alpha-type protein kinase family. ALPK subfamily.

The chain is Alpha-protein kinase 1 (ak1) from Dictyostelium discoideum (Social amoeba).